The sequence spans 207 residues: ATP-dependent Clp protease proteolytic subunit (207 aa).

The active-site Nucleophile is S111. Residue H136 is part of the active site.

It belongs to the peptidase S14 family. In terms of assembly, fourteen ClpP subunits assemble into 2 heptameric rings which stack back to back to give a disk-like structure with a central cavity, resembling the structure of eukaryotic proteasomes.

Its subcellular location is the cytoplasm. The enzyme catalyses Hydrolysis of proteins to small peptides in the presence of ATP and magnesium. alpha-casein is the usual test substrate. In the absence of ATP, only oligopeptides shorter than five residues are hydrolyzed (such as succinyl-Leu-Tyr-|-NHMec, and Leu-Tyr-Leu-|-Tyr-Trp, in which cleavage of the -Tyr-|-Leu- and -Tyr-|-Trp bonds also occurs).. Functionally, cleaves peptides in various proteins in a process that requires ATP hydrolysis. Has a chymotrypsin-like activity. Plays a major role in the degradation of misfolded proteins. This is ATP-dependent Clp protease proteolytic subunit from Photorhabdus laumondii subsp. laumondii (strain DSM 15139 / CIP 105565 / TT01) (Photorhabdus luminescens subsp. laumondii).